We begin with the raw amino-acid sequence, 540 residues long: 2,3-bisphosphoglycerate-independent phosphoglycerate mutase (540 aa).

2 residues coordinate Mn(2+): Asp-24 and Ser-74. Residue Ser-74 is the Phosphoserine intermediate of the active site. Residues His-135, 165 to 166 (RD), Arg-197, Arg-203, 268 to 271 (RPDR), and Lys-341 each bind substrate. Asp-408, His-412, Asp-449, His-450, and His-467 together coordinate Mn(2+).

It belongs to the BPG-independent phosphoglycerate mutase family. In terms of assembly, monomer. Mn(2+) is required as a cofactor.

The catalysed reaction is (2R)-2-phosphoglycerate = (2R)-3-phosphoglycerate. It participates in carbohydrate degradation; glycolysis; pyruvate from D-glyceraldehyde 3-phosphate: step 3/5. In terms of biological role, catalyzes the interconversion of 2-phosphoglycerate and 3-phosphoglycerate. The sequence is that of 2,3-bisphosphoglycerate-independent phosphoglycerate mutase from Prochlorococcus marinus (strain MIT 9313).